The primary structure comprises 699 residues: 1,4-alpha-glucan-branching enzyme (699 aa).

Residues 59 to 60 (NE) and 88 to 90 (WAP) contribute to the substrate site. (1,4-alpha-D-glucosyl)n is bound at residue W104. Position 115 to 118 (115 to 118 (DYGK)) interacts with substrate. K140 provides a ligand contact to (1,4-alpha-D-glucosyl)n. Y170 carries the post-translational modification Phosphotyrosine. 330–333 (EVLR) lines the substrate pocket. D354 functions as the Nucleophile in the catalytic mechanism. The active-site Proton donor is E409.

It belongs to the glycosyl hydrolase 13 family. GlgB subfamily. As to quaternary structure, monomer.

It catalyses the reaction Transfers a segment of a (1-&gt;4)-alpha-D-glucan chain to a primary hydroxy group in a similar glucan chain.. Its pathway is glycan biosynthesis; glycogen biosynthesis. Its function is as follows. Glycogen-branching enzyme participates in the glycogen biosynthetic process along with glycogenin and glycogen synthase. Generates alpha-1,6-glucosidic branches from alpha-1,4-linked glucose chains, to increase solubility of the glycogen polymer. The sequence is that of 1,4-alpha-glucan-branching enzyme (GBE1) from Felis catus (Cat).